A 1293-amino-acid polypeptide reads, in one-letter code: Cilia- and flagella-associated protein 57 A (1293 aa).

One copy of the WD 1 repeat lies at 72–113 (PGTKGITCMTLSPSKRLLAWSEDCDSGIIVVFDLIKLDKLEK). The disordered stretch occupies residues 117–143 (QNYQEPSDKDKLDKQAEKDRRDRFEKE). Over residues 122–143 (PSDKDKLDKQAEKDRRDRFEKE) the composition is skewed to basic and acidic residues. WD repeat units lie at residues 309-348 (PKNEQFAIQCIQPYSKGFLVGGKECTILFYEKDVDLKNPY), 359-398 (DMKAMITSLLLTPNEEKLIVGVDSGQLLQVPFTSDSMQLN), 411-450 (FHSDKITGLDVCIRKSLVATCSVDKTVRIWNYSDNQLENS), 535-574 (RGSGKVRTIFWEEDDQGFYTGSTDGLVIYWRVDDNGPQKT), and 700-739 (SHFGPITRMRISFKDNYIFTAGEDGALIIYENKEKEYQVK). 3 coiled-coil regions span residues 756–1016 (RDQY…REKT), 1045–1079 (IKELKRDIGPKEEEIAKMKEQIANMNSEILHFKRT), and 1209–1285 (INHL…QIQN).

This sequence belongs to the CFAP57 family. Forms a heterodimer with CFAP57C. Associates with components of the nexin-dynein regulatory complex (N-DRC) and the CFAP184:CFAP263 complex.

Its subcellular location is the cell projection. It localises to the cilium. In terms of biological role, associates with components of the nexin-dynein regulatory complex (N-DRC), a key regulator of ciliary/flagellar motility, and might act as an inner dynein arm (IDA) hub or linkage. This Tetrahymena thermophila (strain SB210) protein is Cilia- and flagella-associated protein 57 A (CFAP57A).